We begin with the raw amino-acid sequence, 333 residues long: Autoinducer 2 import system permease protein LsrC (333 aa).

9 consecutive transmembrane segments (helical) span residues 14 to 34 (LIAILCLFGLLSVIDHQYFSL), 39 to 59 (LVFSSAQILILLAMGATLVML), 70 to 90 (IAGLCAVIMGMSLNAGFSLSV), 93 to 113 (LLTLLLGMCAGFFNGALVTWL), 115 to 135 (IPAIVTTLGTLGLYRGLMLLL), 157 to 177 (LNISPIGWLLMILILAMAWIL), 206 to 226 (IQIIAFSVNGVMAALAGIVFA), 252 to 272 (GISLLGGTGTVIGAILGAFFL), and 284 to 304 (LPAWWNDFIAGFVLLAVLIFD).

It belongs to the binding-protein-dependent transport system permease family. AraH/RbsC subfamily. As to quaternary structure, the complex is composed of two ATP-binding proteins (LsrA), two transmembrane proteins (LsrC and LsrD) and a solute-binding protein (LsrB).

The protein localises to the cell inner membrane. In terms of biological role, part of the ABC transporter complex LsrABCD involved in autoinducer 2 (AI-2) import. Probably responsible for the translocation of the substrate across the membrane. The chain is Autoinducer 2 import system permease protein LsrC (lsrC) from Photorhabdus laumondii subsp. laumondii (strain DSM 15139 / CIP 105565 / TT01) (Photorhabdus luminescens subsp. laumondii).